Consider the following 1755-residue polypeptide: Transposon Ty1-PL Gag-Pol polyprotein (1755 aa).

Composition is skewed to polar residues over residues 1–23 (MESQ…SVTS), 48–60 (TKAN…TPAS), and 127–152 (QSQF…GNTF). Disordered stretches follow at residues 1-93 (MESQ…MMTQ), 126-174 (PQSQ…PPPM), and 352-421 (GSRN…SKST). Positions 153 to 165 (TDSSSADSDMTST) are enriched in low complexity. An RNA-binding region spans residues 299 to 401 (NNGIHINNKV…NSKSKTARAH (103 aa)). The segment covering 402–418 (NVSTSNNSPSTDNDSIS) has biased composition (low complexity). Ser416 is modified (phosphoserine). Residue Asp461 is the For protease activity; shared with dimeric partner of the active site. Residues 583 to 640 (NVHTSESTRKYPYPFIHRMLAHANAQTIRYSLKNNTITYFNESDVDWSSAIDYQCPDC) form an integrase-type zinc finger-like region. The Integrase catalytic domain occupies 660 to 835 (NSYEPFQYLH…AGLDISTLLP (176 aa)). Mg(2+) is bound by residues Asp671 and Asp736. Disordered stretches follow at residues 956-1087 (SKAV…ETEK), 1092-1111 (RSPS…NIVP), and 1130-1187 (DLPL…DNET). Over residues 960-969 (SPTDSTPPST) the composition is skewed to low complexity. The segment covering 1005–1015 (STPQISNIEST) has biased composition (polar residues). Basic and acidic residues predominate over residues 1038–1053 (ESSHASKSKDFRHSDS). 2 stretches are compositionally biased toward polar residues: residues 1054–1082 (YSEN…QISD) and 1101–1111 (PENNSSHNIVP). A Bipartite nuclear localization signal motif is present at residues 1178–1212 (KKRSLEDNETEIKVSRDTWNTKNMRSLEPPRSKKR). Positions 1338–1476 (NNYYITQLDI…DILGLEIKYQ (139 aa)) constitute a Reverse transcriptase Ty1/copia-type domain. Mg(2+)-binding residues include Asp1346, Asp1427, Asp1428, Asp1610, Glu1652, and Asp1685. The RNase H Ty1/copia-type domain occupies 1610–1752 (DASYGNQPYY…IKTFKLLTNK (143 aa)).

As to quaternary structure, the capsid protein forms a homotrimer, from which the VLPs are assembled. The protease is a homodimer, whose active site consists of two apposed aspartic acid residues. Initially, virus-like particles (VLPs) are composed of the structural unprocessed proteins Gag and Gag-Pol, and also contain the host initiator methionine tRNA (tRNA(i)-Met) which serves as a primer for minus-strand DNA synthesis, and a dimer of genomic Ty RNA. Processing of the polyproteins occurs within the particle and proceeds by an ordered pathway, called maturation. First, the protease (PR) is released by autocatalytic cleavage of the Gag-Pol polyprotein yielding capsid protein p45 and a Pol-p154 precursor protein. This cleavage is a prerequisite for subsequent processing of Pol-p154 at the remaining sites to release the mature structural and catalytic proteins. Maturation takes place prior to the RT reaction and is required to produce transposition-competent VLPs.

The protein localises to the cytoplasm. It localises to the nucleus. It carries out the reaction DNA(n) + a 2'-deoxyribonucleoside 5'-triphosphate = DNA(n+1) + diphosphate. It catalyses the reaction Endonucleolytic cleavage to 5'-phosphomonoester.. In terms of biological role, capsid protein (CA) is the structural component of the virus-like particle (VLP), forming the shell that encapsulates the retrotransposons dimeric RNA genome. The particles are assembled from trimer-clustered units and there are holes in the capsid shells that allow for the diffusion of macromolecules. CA also has nucleocapsid-like chaperone activity, promoting primer tRNA(i)-Met annealing to the multipartite primer-binding site (PBS), dimerization of Ty1 RNA and initiation of reverse transcription. Functionally, the aspartyl protease (PR) mediates the proteolytic cleavages of the Gag and Gag-Pol polyproteins after assembly of the VLP. Its function is as follows. Reverse transcriptase/ribonuclease H (RT) is a multifunctional enzyme that catalyzes the conversion of the retro-elements RNA genome into dsDNA within the VLP. The enzyme displays a DNA polymerase activity that can copy either DNA or RNA templates, and a ribonuclease H (RNase H) activity that cleaves the RNA strand of RNA-DNA heteroduplexes during plus-strand synthesis and hydrolyzes RNA primers. The conversion leads to a linear dsDNA copy of the retrotransposon that includes long terminal repeats (LTRs) at both ends. Integrase (IN) targets the VLP to the nucleus, where a subparticle preintegration complex (PIC) containing at least integrase and the newly synthesized dsDNA copy of the retrotransposon must transit the nuclear membrane. Once in the nucleus, integrase performs the integration of the dsDNA into the host genome. This Saccharomyces cerevisiae (strain ATCC 204508 / S288c) (Baker's yeast) protein is Transposon Ty1-PL Gag-Pol polyprotein (TY1B-PL).